Here is a 237-residue protein sequence, read N- to C-terminus: B3 domain-containing protein At1g20600 (237 aa).

A disordered region spans residues 53–79 (LVSQANQKQSRKREEKTEKNQPKRVKN). Residues 64 to 73 (KREEKTEKNQ) are compositionally biased toward basic and acidic residues. The TF-B3 DNA-binding region spans 126–230 (KKQLMSSDVD…LEHVFIRGSK (105 aa)).

The protein resides in the nucleus. The protein is B3 domain-containing protein At1g20600 of Arabidopsis thaliana (Mouse-ear cress).